The sequence spans 429 residues: tRNA(Ile2) 2-agmatinylcytidine synthetase TiaS (429 aa).

A disordered region spans residues 403–429 (KPPERPLHPSKSLEPPSTPIHSDTISL).

It belongs to the TiaS family.

It is found in the cytoplasm. The catalysed reaction is cytidine(34) in tRNA(Ile2) + agmatine + ATP + H2O = 2-agmatinylcytidine(34) in tRNA(Ile2) + AMP + 2 phosphate + 2 H(+). Its function is as follows. ATP-dependent agmatine transferase that catalyzes the formation of 2-agmatinylcytidine (agm2C) at the wobble position (C34) of tRNA(Ile2), converting the codon specificity from AUG to AUA. The protein is tRNA(Ile2) 2-agmatinylcytidine synthetase TiaS of Hyperthermus butylicus (strain DSM 5456 / JCM 9403 / PLM1-5).